Here is a 668-residue protein sequence, read N- to C-terminus: MLKKCILLVFLCVGLIGLIGCSKTDSPEDRMEAFVKQWNDQQFDDMYQSLTKDVKKEISKKDFVNRYKAIYEQAGVKNLKVTAGEVDKDDQDNKTMKHIPYKVSMNTNAGKVSFKNTAVLKLEKTDDEESWNIDWDPSFIFKQLADDKTVQIMSIEPKRGQIYDKNGKGLAVNTDVPEIGIVPGELGDKKEKVIKELAKKLDLTEDDIKKKLDQGWVKDDSFVPLKKVKPDQEKLVSEATSLQGVTRTNVSSRYYPYGEKTAHLTGYVRAITAEELKKKKEGTYSDTSNIGIAGLENVYEDKLRGTTGWKIYVPQTGEVIAEKKAKDGEDLHLTIDIKTQMKLYDELKDDSGAAVALQPKTGETLALVSAPSYDPNGFIFGWSDKEWKKLNKDKNNPFSAKFNKTYAPGSTIKPIAAAIGIKNGTLKADEKKTIKGKEWQKDSSWGGYSVTRVSERLQQVDLENALITSDNIYFAQNALDMGADTFTKGLKTFGFSEDVPYEFPIQKSSIANDKLDSDILLADTGYGQGQMQMSPLHLATAYTPFVDNGDLVKPTLIKKDSQTADVWHKQVVTKEGAADITKGLKGVVEDERGSAYQPVVKGITVAGKTGTAELKTSKDDKDGTENGWFVGYDYENKDLLVAMMIQNVQDRGGSHYVVEKAKKQFQSN.

A helical membrane pass occupies residues 7–23; the sequence is LLVFLCVGLIGLIGCSK. Serine 410 (acyl-ester intermediate) is an active-site residue.

Belongs to the transpeptidase family.

It is found in the cell membrane. It localises to the forespore inner membrane. Its subcellular location is the forespore outer membrane. The protein localises to the membrane raft. The enzyme catalyses Preferential cleavage: (Ac)2-L-Lys-D-Ala-|-D-Ala. Also transpeptidation of peptidyl-alanyl moieties that are N-acyl substituents of D-alanine.. It functions in the pathway cell wall biogenesis; peptidoglycan biosynthesis. Functionally, penicillin-binding proteins (PBPs) function in the late steps of murein biosynthesis. Probably required for both cortical and vegetative peptidoglycan synthesis. Although not usually required for cell division, in the absence of PBP 2B (pbpB) it becomes essential. Confers resistance to oxacillin and cephalexin. The sequence is that of Penicillin-binding protein 3 from Bacillus subtilis (strain 168).